A 483-amino-acid polypeptide reads, in one-letter code: Acyl-coenzyme A thioesterase 2, mitochondrial (483 aa).

Lys104 is subject to N6-acetyllysine. Active-site charge relay system residues include Ser294, Asp388, and His422. Lys470 carries the post-translational modification N6-succinyllysine. Positions 481–483 (SKV) match the Microbody targeting signal motif.

Belongs to the C/M/P thioester hydrolase family. Monomer. As to expression, strongest expression in heart, liver, muscle and kidney. Weak in placenta and pancreas.

Its subcellular location is the mitochondrion. It catalyses the reaction hexadecanoyl-CoA + H2O = hexadecanoate + CoA + H(+). The catalysed reaction is tetradecanoyl-CoA + H2O = tetradecanoate + CoA + H(+). It carries out the reaction octadecanoyl-CoA + H2O = octadecanoate + CoA + H(+). The enzyme catalyses eicosanoyl-CoA + H2O = eicosanoate + CoA + H(+). It catalyses the reaction decanoyl-CoA + H2O = decanoate + CoA + H(+). The catalysed reaction is dodecanoyl-CoA + H2O = dodecanoate + CoA + H(+). It carries out the reaction (9Z)-octadecenoyl-CoA + H2O = (9Z)-octadecenoate + CoA + H(+). The enzyme catalyses (9Z)-hexadecenoyl-CoA + H2O = (9Z)-hexadecenoate + CoA + H(+). It catalyses the reaction (9E)-octadecenoyl-CoA + H2O = (9E)-octadecenoate + CoA + H(+). The catalysed reaction is (9Z,12Z)-octadecadienoyl-CoA + H2O = (9Z,12Z)-octadecadienoate + CoA + H(+). Its pathway is lipid metabolism; fatty acid metabolism. Its function is as follows. Catalyzes the hydrolysis of acyl-CoAs into free fatty acids and coenzyme A (CoASH), regulating their respective intracellular levels. Displays higher activity toward long chain acyl CoAs (C14-C20). The enzyme is involved in enhancing the hepatic fatty acid oxidation in mitochondria. The chain is Acyl-coenzyme A thioesterase 2, mitochondrial (ACOT2) from Homo sapiens (Human).